The chain runs to 194 residues: Adenylate kinase (194 aa).

ATP is bound at residue G10 to T15. The NMP stretch occupies residues S30–V59. AMP contacts are provided by residues T31, R36, G57–V59, G85–R88, and Q92. The LID stretch occupies residues N126–D142. R127 contributes to the ATP binding site. Residues R139 and R150 each contribute to the AMP site. Residue A178 coordinates ATP.

Belongs to the adenylate kinase family. In terms of assembly, monomer.

The protein resides in the cytoplasm. The catalysed reaction is AMP + ATP = 2 ADP. It functions in the pathway purine metabolism; AMP biosynthesis via salvage pathway; AMP from ADP: step 1/1. Catalyzes the reversible transfer of the terminal phosphate group between ATP and AMP. Plays an important role in cellular energy homeostasis and in adenine nucleotide metabolism. This is Adenylate kinase from Azorhizobium caulinodans (strain ATCC 43989 / DSM 5975 / JCM 20966 / LMG 6465 / NBRC 14845 / NCIMB 13405 / ORS 571).